Consider the following 581-residue polypeptide: NADH-quinone oxidoreductase subunit C/D (581 aa).

The tract at residues 1-172 is NADH dehydrogenase I subunit C; the sequence is MSGTDLVSEL…PLFNMTAALF (172 aa). The segment at 196-581 is NADH dehydrogenase I subunit D; it reads ELMILNYGPH…IDYVMSDVDR (386 aa).

This sequence in the N-terminal section; belongs to the complex I 30 kDa subunit family. In the C-terminal section; belongs to the complex I 49 kDa subunit family. NDH-1 is composed of 13 different subunits. Subunits NuoB, CD, E, F, and G constitute the peripheral sector of the complex.

It localises to the cell inner membrane. The enzyme catalyses a quinone + NADH + 5 H(+)(in) = a quinol + NAD(+) + 4 H(+)(out). Functionally, NDH-1 shuttles electrons from NADH, via FMN and iron-sulfur (Fe-S) centers, to quinones in the respiratory chain. The immediate electron acceptor for the enzyme in this species is believed to be ubiquinone. Couples the redox reaction to proton translocation (for every two electrons transferred, four hydrogen ions are translocated across the cytoplasmic membrane), and thus conserves the redox energy in a proton gradient. The polypeptide is NADH-quinone oxidoreductase subunit C/D (Rhodopseudomonas palustris (strain BisB5)).